The following is a 193-amino-acid chain: 3-isopropylmalate dehydratase small subunit (193 aa).

It belongs to the LeuD family. LeuD type 1 subfamily. As to quaternary structure, heterodimer of LeuC and LeuD.

The enzyme catalyses (2R,3S)-3-isopropylmalate = (2S)-2-isopropylmalate. Its pathway is amino-acid biosynthesis; L-leucine biosynthesis; L-leucine from 3-methyl-2-oxobutanoate: step 2/4. Its function is as follows. Catalyzes the isomerization between 2-isopropylmalate and 3-isopropylmalate, via the formation of 2-isopropylmaleate. The sequence is that of 3-isopropylmalate dehydratase small subunit from Bacillus thuringiensis subsp. konkukian (strain 97-27).